We begin with the raw amino-acid sequence, 350 residues long: UDP-glucose 4-epimerase (350 aa).

Residue 7–38 coordinates NAD(+); sequence KILVTGSAGFIGTHTVVQLLNNGFNVSIIDNF. Residue serine 133 coordinates substrate. Tyrosine 157 acts as the Proton acceptor in catalysis.

The protein belongs to the NAD(P)-dependent epimerase/dehydratase family. Requires NAD(+) as cofactor.

The enzyme catalyses UDP-alpha-D-glucose = UDP-alpha-D-galactose. Its pathway is carbohydrate metabolism; galactose metabolism. The protein is UDP-glucose 4-epimerase (GALE) of Pisum sativum (Garden pea).